Here is a 433-residue protein sequence, read N- to C-terminus: 2,2-dialkylglycine decarboxylase (433 aa).

Lys272 is subject to N6-(pyridoxal phosphate)lysine.

Belongs to the class-III pyridoxal-phosphate-dependent aminotransferase family. Homotetramer. Pyridoxal 5'-phosphate serves as cofactor.

The enzyme catalyses 2,2-dialkylglycine + pyruvate + H(+) = dialkyl ketone + L-alanine + CO2. Functionally, the dialkylglycine decarboxylase is of interest because it normally catalyzes both decarboxylation and amino transfer. It may be more properly described as a decarboxylating aminotransferase rather than an aminotransferring decarboxylase. The sequence is that of 2,2-dialkylglycine decarboxylase (dgdA) from Burkholderia cepacia (Pseudomonas cepacia).